An 847-amino-acid polypeptide reads, in one-letter code: Follistatin-related protein 5 (847 aa).

Positions 1–20 (MFKCWSVVLVLGFIFLESEG) are cleaved as a signal peptide. In terms of domain architecture, Kazal-like spans 83–135 (GQAECACMDLCKRHYKPVCGSDGEFYENHCEVHRAACLKKQKITIVHNEDCFF). Disulfide bonds link C89–C119, C93–C112, and C101–C133. 2 consecutive EF-hand domains span residues 175 to 210 (RKKLLVDQMFKYFDADSNGLVDINELTQVIKQEELG) and 211 to 246 (KDLFDCTLYVLLKYDDFNADKHLALEEFYRAFQVIQ). Positions 188, 190, 192, 199, 226, 228, 230, 232, and 237 each coordinate Ca(2+). 2 Ig-like domains span residues 250-337 (PEDQ…IFQV) and 341-426 (PVIR…EDIS). 2 disulfides stabilise this stretch: C270/C321 and C362/C413. N318 and N394 each carry an N-linked (GlcNAc...) asparagine glycan.

The protein resides in the secreted. This chain is Follistatin-related protein 5 (FSTL5), found in Homo sapiens (Human).